We begin with the raw amino-acid sequence, 438 residues long: GTPase Der (438 aa).

EngA-type G domains are found at residues proline 4 to proline 168 and leucine 176 to asparagine 351. GTP is bound by residues glycine 10–serine 17, aspartate 57–isoleucine 61, asparagine 120–glutamate 123, glycine 182–serine 189, aspartate 229–methionine 233, and asparagine 294–aspartate 297. The 85-residue stretch at arginine 352–arginine 436 folds into the KH-like domain.

It belongs to the TRAFAC class TrmE-Era-EngA-EngB-Septin-like GTPase superfamily. EngA (Der) GTPase family. Associates with the 50S ribosomal subunit.

GTPase that plays an essential role in the late steps of ribosome biogenesis. The protein is GTPase Der of Moorella thermoacetica (strain ATCC 39073 / JCM 9320).